The primary structure comprises 207 residues: Putative 3-methyladenine DNA glycosylase (207 aa).

The protein belongs to the DNA glycosylase MPG family.

The protein is Putative 3-methyladenine DNA glycosylase of Burkholderia lata (strain ATCC 17760 / DSM 23089 / LMG 22485 / NCIMB 9086 / R18194 / 383).